The sequence spans 72 residues: Long neurotoxin 1 (72 aa).

Intrachain disulfides connect Cys3-Cys21, Cys14-Cys42, Cys27-Cys31, Cys46-Cys57, and Cys58-Cys63.

The protein belongs to the three-finger toxin family. Long-chain subfamily. Type II alpha-neurotoxin sub-subfamily. Expressed by the venom gland.

The protein localises to the secreted. Its function is as follows. Binds with high affinity to muscular (alpha-1/CHRNA1) and neuronal (alpha-7/CHRNA7) nicotinic acetylcholine receptor (nAChR) and inhibits acetylcholine from binding to the receptor, thereby impairing neuromuscular and neuronal transmission. This is Long neurotoxin 1 from Naja anchietae (Anchieta's cobra).